A 331-amino-acid chain; its full sequence is High-affinity nickel-transport protein NixA (331 aa).

7 helical membrane-spanning segments follow: residues 3 to 23 (LWFP…ALLF), 77 to 97 (MGHS…IAWA), 110 to 130 (VVGT…NAII), 184 to 204 (PVGF…LLAL), 213 to 233 (VVGM…FDTL), 259 to 279 (ITAL…FQVI), and 302 to 322 (DLGY…FFLW).

The protein belongs to the NiCoT transporter (TC 2.A.52) family.

The protein resides in the cell inner membrane. In terms of biological role, high-affinity nickel intake protein. Imports nickel ions in an energy-dependent fashion. Necessary for the expression of catalytically active urease. The chain is High-affinity nickel-transport protein NixA (nixA) from Helicobacter pylori (strain J99 / ATCC 700824) (Campylobacter pylori J99).